A 103-amino-acid chain; its full sequence is Large ribosomal subunit protein uL24 (103 aa).

The protein belongs to the universal ribosomal protein uL24 family. In terms of assembly, part of the 50S ribosomal subunit.

Functionally, one of two assembly initiator proteins, it binds directly to the 5'-end of the 23S rRNA, where it nucleates assembly of the 50S subunit. One of the proteins that surrounds the polypeptide exit tunnel on the outside of the subunit. The chain is Large ribosomal subunit protein uL24 from Treponema pallidum (strain Nichols).